A 183-amino-acid polypeptide reads, in one-letter code: UPF0397 protein PBPRA2239 (183 aa).

Transmembrane regions (helical) follow at residues valine 8–isoleucine 28, alanine 41–isoleucine 61, phenylalanine 69–isoleucine 89, phenylalanine 110–tyrosine 130, and leucine 147–threonine 167.

It belongs to the UPF0397 family.

The protein localises to the cell membrane. The polypeptide is UPF0397 protein PBPRA2239 (Photobacterium profundum (strain SS9)).